Consider the following 68-residue polypeptide: DNA-directed RNA polymerase subunit omega (68 aa).

Belongs to the RNA polymerase subunit omega family. The RNAP catalytic core consists of 2 alpha, 1 beta, 1 beta' and 1 omega subunit. When a sigma factor is associated with the core the holoenzyme is formed, which can initiate transcription.

It catalyses the reaction RNA(n) + a ribonucleoside 5'-triphosphate = RNA(n+1) + diphosphate. Functionally, promotes RNA polymerase assembly. Latches the N- and C-terminal regions of the beta' subunit thereby facilitating its interaction with the beta and alpha subunits. The polypeptide is DNA-directed RNA polymerase subunit omega (Neisseria gonorrhoeae (strain NCCP11945)).